We begin with the raw amino-acid sequence, 515 residues long: Protein FAM98A (515 aa).

Disordered regions lie at residues 297-410 and 432-515; these read VLMG…GYHG and SGYQ…HYTS. Basic and acidic residues predominate over residues 302 to 311; that stretch reads VPDRGGRPNE. Positions 382–394 are enriched in gly residues; it reads WTDGGSGSGGGYQ. Residues 444-456 show a composition bias toward basic and acidic residues; that stretch reads RYQDGGHHGERGS. Positions 457–481 are enriched in gly residues; that stretch reads GRGGRGGRGGRGGRGSQGGGWGGRG. Positions 485-501 are enriched in low complexity; sequence YHQGGQFEQHFQHGGYQ. The segment covering 502–515 has biased composition (polar residues); it reads YSHSGFGQGRHYTS.

It belongs to the FAM98 family. In terms of assembly, interacts (via N- and C-terminus) with DDX1. Interacts (via N- and C-terminus) with C14orf166. Interacts with FAM98B. Interacts with PLEKHM1 (via N- and C-terminus).

Its function is as follows. Positively stimulates PRMT1-induced protein arginine methylation. Involved in skeletal homeostasis. Positively regulates lysosome peripheral distribution and ruffled border formation in osteoclasts. The polypeptide is Protein FAM98A (Mus musculus (Mouse)).